Here is a 721-residue protein sequence, read N- to C-terminus: 1,4-alpha-glucan branching enzyme GlgB (721 aa).

The active-site Nucleophile is aspartate 404. Residue glutamate 457 is the Proton donor of the active site.

It belongs to the glycosyl hydrolase 13 family. GlgB subfamily. In terms of assembly, monomer.

It carries out the reaction Transfers a segment of a (1-&gt;4)-alpha-D-glucan chain to a primary hydroxy group in a similar glucan chain.. It functions in the pathway glycan biosynthesis; glycogen biosynthesis. Functionally, catalyzes the formation of the alpha-1,6-glucosidic linkages in glycogen by scission of a 1,4-alpha-linked oligosaccharide from growing alpha-1,4-glucan chains and the subsequent attachment of the oligosaccharide to the alpha-1,6 position. The sequence is that of 1,4-alpha-glucan branching enzyme GlgB from Bradyrhizobium diazoefficiens (strain JCM 10833 / BCRC 13528 / IAM 13628 / NBRC 14792 / USDA 110).